The chain runs to 238 residues: Peroxisomal coenzyme A diphosphatase NUDT7 (238 aa).

N6-succinyllysine is present on Lys-20. One can recognise a Nudix hydrolase domain in the interval 37 to 172 (YNKYSVLLPL…VTRLGHRFIN (136 aa)). Positions 77–98 (KRDPTDMDDAATALREAQEEVG) match the Nudix box motif. Glu-92 and Glu-96 together coordinate Mg(2+). The short motif at 236–238 (SRL) is the Microbody targeting signal element.

Belongs to the Nudix hydrolase family. PCD1 subfamily. As to quaternary structure, monomer. Mn(2+) serves as cofactor. It depends on Mg(2+) as a cofactor. In terms of tissue distribution, expressed in liver, kidney, pancreas, pituitary, small intestine, spleen, heart and placenta. Weakly expressed in brain.

It is found in the peroxisome. The catalysed reaction is hexanoyl-CoA + H2O = hexanoyl-4'-phosphopantetheine + adenosine 3',5'-bisphosphate + 2 H(+). The enzyme catalyses octanoyl-CoA + H2O = S-octanoyl-4'-phosphopantetheine + adenosine 3',5'-bisphosphate + 2 H(+). It catalyses the reaction butanoyl-CoA + H2O = S-butanoyl-4'-phosphopantetheine + adenosine 3',5'-bisphosphate + 2 H(+). It carries out the reaction decanoyl-CoA + H2O = decanoyl-4'-phosphopantetheine + adenosine 3',5'-bisphosphate + 2 H(+). The catalysed reaction is dodecanoyl-CoA + H2O = S-dodecanoyl-4'-phosphopantetheine + adenosine 3',5'-bisphosphate + 2 H(+). The enzyme catalyses tetradecanoyl-CoA + H2O = tetradecanoyl-4'-phosphopantetheine + adenosine 3',5'-bisphosphate + 2 H(+). It catalyses the reaction choloyl-CoA + H2O = S-choloyl-4'-phosphopantetheine + adenosine 3',5'-bisphosphate + 2 H(+). It carries out the reaction 3alpha,7alpha,12alpha-trihydroxy-5beta-cholestan-26-oyl-CoA + H2O = 3alpha,7alpha,12alpha-trihydroxy-5beta-cholestan-26-oyl-4'-phosphopantetheine + adenosine 3',5'-bisphosphate + 2 H(+). The catalysed reaction is acetyl-CoA + H2O = S-acetyl-4'-phosphopantetheine + adenosine 3',5'-bisphosphate + 2 H(+). The enzyme catalyses CoA + H2O = (R)-4'-phosphopantetheine + adenosine 3',5'-bisphosphate + 2 H(+). It catalyses the reaction propanoyl-CoA + H2O = propanoyl-4'-phosphopantetheine + adenosine 3',5'-bisphosphate + 2 H(+). It carries out the reaction malonyl-CoA + H2O = malonyl-4'-phosphopantetheine + adenosine 3',5'-bisphosphate + 2 H(+). The catalysed reaction is succinyl-CoA + H2O = succinyl-4'-phosphopantetheine + adenosine 3',5'-bisphosphate + 2 H(+). The enzyme catalyses a 5'-end CoA-ribonucleoside in mRNA + H2O = a 5'-end phospho-adenosine-phospho-ribonucleoside in mRNA + (R)-4'-phosphopantetheine + 2 H(+). Inhibited by fluoride. Its function is as follows. Fatty acyl-coenzyme A (CoA) diphosphatase that hydrolyzes fatty acyl-CoA to yield acyl-4'-phosphopantetheine and adenosine 3',5'-bisphosphate. Cleaves CoA, CoA esters and oxidized CoA with similar efficiencies. Preferentially hydrolyzes medium-chain acyl-CoAs and bile acid-CoAs. Has no activity toward NDP-sugars, CDP-alcohols, (deoxy)nucleoside 5'-triphosphates, nucleoside 5'-di or monophosphates, diadenosine polyphosphates, NAD, NADH, NADP, NADPH or thymidine-5'-monophospho-p-nitrophenyl ester. May be required to eliminate oxidized CoA from peroxisomes, or regulate CoA and acyl-CoA levels in this organelle in response to metabolic demand. Does not play a role in U8 snoRNA decapping activity. Binds U8 snoRNA. Exhibits decapping activity towards dpCoA-capped RNAs in vitro. The protein is Peroxisomal coenzyme A diphosphatase NUDT7 of Homo sapiens (Human).